A 137-amino-acid polypeptide reads, in one-letter code: L-ectoine synthase (137 aa).

Positions 115–137 are disordered; sequence EVHDESGAYPADPELAREPVAAD.

Belongs to the ectoine synthase family.

It carries out the reaction (2S)-4-acetamido-2-aminobutanoate = L-ectoine + H2O. It functions in the pathway amine and polyamine biosynthesis; ectoine biosynthesis; L-ectoine from L-aspartate 4-semialdehyde: step 3/3. Catalyzes the circularization of gamma-N-acetyl-alpha,gamma-diaminobutyric acid (ADABA) to ectoine (1,4,5,6-tetrahydro-2-methyl-4-pyrimidine carboxylic acid), which is an excellent osmoprotectant. The protein is L-ectoine synthase of Sphingopyxis alaskensis (strain DSM 13593 / LMG 18877 / RB2256) (Sphingomonas alaskensis).